The primary structure comprises 334 residues: N-acetyl-gamma-glutamyl-phosphate reductase (334 aa).

The active site involves cysteine 154.

It belongs to the NAGSA dehydrogenase family. Type 1 subfamily.

It is found in the cytoplasm. It carries out the reaction N-acetyl-L-glutamate 5-semialdehyde + phosphate + NADP(+) = N-acetyl-L-glutamyl 5-phosphate + NADPH + H(+). The protein operates within amino-acid biosynthesis; L-arginine biosynthesis; N(2)-acetyl-L-ornithine from L-glutamate: step 3/4. Its function is as follows. Catalyzes the NADPH-dependent reduction of N-acetyl-5-glutamyl phosphate to yield N-acetyl-L-glutamate 5-semialdehyde. In Vibrio parahaemolyticus serotype O3:K6 (strain RIMD 2210633), this protein is N-acetyl-gamma-glutamyl-phosphate reductase.